The primary structure comprises 82 residues: Small ribosomal subunit protein eS17 (82 aa).

The protein belongs to the eukaryotic ribosomal protein eS17 family.

The chain is Small ribosomal subunit protein eS17 from Sulfolobus acidocaldarius (strain ATCC 33909 / DSM 639 / JCM 8929 / NBRC 15157 / NCIMB 11770).